Reading from the N-terminus, the 87-residue chain is Keratin-associated protein 19-3 (87 aa).

Residues 9 to 82 (GGLGYGYGSF…RRPSCCGGYG (74 aa)) form a 23 X 2 AA repeats of G-[YCGS] region.

Belongs to the KRTAP type 19 family. As to quaternary structure, interacts with hair keratins. In terms of tissue distribution, strong expression in narrowly defined pattern restricted to the lower and middle cortical regions of the hair shaft in both developing and cycling hair. During hair follicle regression (catagen), expression levels decrease until expression is no longer detectable in follicles at resting stage (telogen).

Functionally, in the hair cortex, hair keratin intermediate filaments are embedded in an interfilamentous matrix, consisting of hair keratin-associated proteins (KRTAP), which are essential for the formation of a rigid and resistant hair shaft through their extensive disulfide bond cross-linking with abundant cysteine residues of hair keratins. The matrix proteins include the high-sulfur and high-glycine-tyrosine keratins. The polypeptide is Keratin-associated protein 19-3 (Krtap19-3) (Mus musculus (Mouse)).